Here is a 522-residue protein sequence, read N- to C-terminus: N-acetylgalactosamine-6-sulfatase (522 aa).

A signal peptide spans Met1–Gly25. The catalytic domain stretch occupies residues Pro27–Glu379. Positions 38, 39, and 78 each coordinate Ca(2+). The active-site Nucleophile is the Cys78. Cys78 is subject to 3-oxoalanine (Cys). Residue His141 is part of the active site. Asn203 carries N-linked (GlcNAc...) asparagine glycosylation. Positions 288 and 289 each coordinate Ca(2+). Cys308 and Cys419 form a disulfide bridge. An N-linked (GlcNAc...) asparagine glycan is attached at Asn423. 2 disulfides stabilise this stretch: Cys489-Cys518 and Cys501-Cys507.

The protein belongs to the sulfatase family. In terms of assembly, homodimer. It depends on Ca(2+) as a cofactor. In terms of processing, the conversion to 3-oxoalanine (also known as C-formylglycine, FGly), of a serine or cysteine residue in prokaryotes and of a cysteine residue in eukaryotes, is critical for catalytic activity.

Its subcellular location is the lysosome. It catalyses the reaction Hydrolysis of the 6-sulfate groups of the N-acetyl-D-galactosamine 6-sulfate units of chondroitin sulfate and of the D-galactose 6-sulfate units of keratan sulfate.. The chain is N-acetylgalactosamine-6-sulfatase (GALNS) from Sus scrofa (Pig).